The sequence spans 156 residues: Transcription antitermination protein NusB (156 aa).

This sequence belongs to the NusB family.

Its function is as follows. Involved in transcription antitermination. Required for transcription of ribosomal RNA (rRNA) genes. Binds specifically to the boxA antiterminator sequence of the ribosomal RNA (rrn) operons. The chain is Transcription antitermination protein NusB from Bartonella quintana (strain Toulouse) (Rochalimaea quintana).